The primary structure comprises 219 residues: Transmembrane emp24 domain-containing protein 10 (219 aa).

Residues 1–31 (MSGSSGPLSWPGPRPCALLFLLLLGPSSVLA) form the signal peptide. Residues 1–142 (MSGSSGPLSW…KNYEEIAKVE (142 aa)) form a required for interaction with STX17 region. Over 32-185 (ISFHLPVNSR…RDTNESTNTR (154 aa)) the chain is Lumenal. The GOLD domain maps to 41 to 193 (RKCLREEIHK…TRVLYFSIFS (153 aa)). The tract at residues 147-178 (LEVELRRLEDLSESIVNDFAYMKKREEEMRDT) is required for TMED10 and TMED2 cis-Golgi network localization. Dimethylated arginine is present on residues Arg-171 and Arg-176. An N-linked (GlcNAc...) asparagine glycan is attached at Asn-179. Residues 186 to 206 (VLYFSIFSMLCLIGLATWQVF) form a helical membrane-spanning segment. The tract at residues 204–219 (QVFYLRRFFKAKKLIE) is interaction with COPG1. The Cytoplasmic segment spans residues 207–219 (YLRRFFKAKKLIE). The interaction with ARF1 and IL1B stretch occupies residues 207–219 (YLRRFFKAKKLIE). The COPII vesicle coat-binding signature appears at 211 to 212 (FF). Residues 211–219 (FFKAKKLIE) carry the COPI vesicle coat-binding motif.

The protein belongs to the EMP24/GP25L family. In terms of assembly, predominantly dimeric and to a lesser extent monomeric in the ER. Monomer and dimer in ERGIC and cis-Golgi network. Forms homooligomer (via GOLD domain); the assembly is promoted by direct binding with leaderless cargos and may form a protein channel that facilitates cargo entry into the ERGIC. Forms heterooligomeric complexes with other members of the p24 family such as TMED2, TMED7 and TMED9. Interacts (via GOLD domain) with TMED2 (via GOLD domain); the complex is required for export of TMED10 from the ER to the cis-Golgi network; the complex is proposed to be involved in cis-Golgi network dynamics and / or biogenesis. Associates with the COPI vesicle coat subunits (coatomer). Tetramerization of the cytoplasmic domain at the Golgi membrane in vitro; the complex is proposed to interact with COPI coatomer and induce budding of the vesicles. Interacts with COPG1; the interaction involves TMED10 homodimer. Interacts with ARF1 (GDP-bound); the interaction probably involves a TMED10 oligomer. Interacts with SEC23A, SEC24B, SEC24C and SEC24D components of the coat protein complex II/COPII, indicative of an association of TMED10 with the COPII vesicle coat. Interacts with CD59. Interacts with MPPE1/PGAP5; the complex might recruit and sort GPI-anchored proteins to the ER-exit site, or the interaction might lead to recycling of PGAP5 between the ER and the Golgi. Interacts with F2LR1/PAR2. Interacts with KDELR2/ERD2; the interaction is disrupted by KDELR2 ligand. Found in a complex composed at least of SURF4, TMED2 and TMED10. Associates with the presenilin-dependent gamma-secretase complex. Interacts with STX17; the interaction is direct. Interacts with IL-1; the interaction is direct. Interacts with RAB21 (active GTP-bound form); the interaction is indirect and regulates TMED10 abundance and localization at the Golgi.

It is found in the endoplasmic reticulum membrane. Its subcellular location is the endoplasmic reticulum-Golgi intermediate compartment membrane. The protein resides in the golgi apparatus membrane. It localises to the golgi apparatus. The protein localises to the cis-Golgi network membrane. It is found in the trans-Golgi network membrane. Its subcellular location is the cytoplasmic vesicle. The protein resides in the secretory vesicle membrane. It localises to the cell membrane. The protein localises to the melanosome. In terms of biological role, cargo receptor involved in protein vesicular trafficking and quality control in the endoplasmic reticulum (ER) and Golgi. The p24 protein family is a group of transmembrane proteins that bind coat protein complex I/COPI and coat protein complex II/COPII involved in vesicular trafficking between the membranes. Acts at the lumenal side for incorporation of secretory cargo molecules into transport vesicles and involved in vesicle coat formation at the cytoplasmic side. Mainly functions in the early secretory pathway and cycles between the ER, ER-Golgi intermediate compartment (ERGIC) and Golgi, mediating cargo transport through COPI and COPII-coated vesicles. In COPII vesicle-mediated anterograde transport, involved in the transport of GPI-anchored proteins by acting together with TMED2 as their cargo receptor; the function specifically implies SEC24C and SEC24D of the COPII vesicle coat and lipid raft-like microdomains of the ER. Recognizes GPI anchors structural remodeled in the ER by the GPI inositol-deacylase/PGAP1 and the metallophosphoesterase MPPE1/PGAP5. In COPI vesicle-mediated retrograde transport, involved in the biogenesis of COPI vesicles and vesicle coat recruitment. Involved in trafficking of amyloid beta A4 protein and soluble APP-beta release (independent from the modulation of gamma-secretase activity). Involved in the KDELR2-mediated retrograde transport of the toxin A subunit (CTX-A-K63)together with COPI and the COOH terminus of KDELR2. On Golgi membranes, acts as a primary receptor for ARF1-GDP, a GTP-binding protein involved in COPI-vesicle formation. Increases coatomer-dependent GTPase-activating activity of ARFGAP2 which mediates the hydrolysis of ARF1-bound GTP and therefore modulates protein trafficking from the Golgi apparatus. Involved in the exocytic trafficking of G protein-coupled receptors F2LR1/PAR2 (trypsin and tryspin-like enzyme receptor), OPRM1 (opioid receptor) and P2RY4 (UTD and UDP receptor) from the Golgi to the plasma membrane, thus contributing to receptor resensitization. In addition to its cargo receptor activity, may also act as a protein channel after oligomerization, facilitating the post-translational entry of leaderless cytoplasmic cargo into the ERGIC. Involved in the translocation into ERGIC, the vesicle entry and the secretion of leaderless cargos (lacking the secretion signal sequence), including the mature form of interleukin 1/IL-1 family members, the alpha-crystallin B chain HSPB5, the carbohydrate-binding proteins galectin-1/LGALS1 and galectin-3/LGALS3, the microtubule-associated protein Tau/MAPT, and the annexin A1/ANXA1; the translocation process is dependent on cargo protein unfolding and enhanced by chaperones HSP90AB1 and HSP90B1/GRP9. Could also associates with the presenilin-dependent gamma-secretase complex in order to regulate gamma-cleavages of the amyloid beta A4 protein to yield amyloid-beta 40/Abeta40. In Mesocricetus auratus (Golden hamster), this protein is Transmembrane emp24 domain-containing protein 10 (TMED10).